The sequence spans 336 residues: Ketoreductase adrE (336 aa).

NADP(+) is bound at residue Tyr-171.

Belongs to the NAD(P)-dependent epimerase/dehydratase family. Dihydroflavonol-4-reductase subfamily.

Its pathway is secondary metabolite biosynthesis; terpenoid biosynthesis. Its function is as follows. Ketoreductase; part of the gene cluster that mediates the biosynthesis of andrastins, meroterpenoid compounds that exhibit inhibitory activity against ras farnesyltransferase, suggesting that they could be promising leads for antitumor agents. The first step of the pathway is the synthesis of 3,5-dimethylorsellinic acid (DMOA) by the polyketide synthase adrD via condensation of one acetyl-CoA starter unit with 3 malonyl-CoA units and 2 methylations. DMAO is then converted to farnesyl-DMAO by the prenyltransferase adrG. The methyltransferase adrK catalyzes the methylation of the carboxyl group of farnesyl-DMAO to farnesyl-DMAO methyl ester which is further converted to epoxyfarnesyl-DMAO methyl ester by the FAD-dependent monooxygenase adrH. The terpene cyclase adrI then catalyzes the carbon skeletal rearrangement to generate the andrastin E, the first compound in the pathway having the andrastin scaffold, with the tetracyclic ring system. The post-cyclization tailoring enzymes adrF, adrE, adrJ, and adrA, are involved in the conversion of andrastin E into andrastin A. The short chain dehydrogenase adrF is responsible for the oxidation of the C-3 a hydroxyl group of andrastin E to yield the corresponding ketone, andrastin D. The ketoreductase adrE stereoselectively reduces the carbonyl moiety to reverse the stereochemistry of the C-3 position to yield andrastin F. The acetyltransferase adrJ is the acetyltransferase that attaches the acetyl group to the C-3 hydroxyl group of andrastin F to yield andrastin C. Finally, the cytochrome P450 monooxygenase adrA catalyzes two sequential oxidation reactions of the C-23 methyl group, to generate the corresponding alcohol andrastin B, and aldehyde andrastin A. This Penicillium roqueforti protein is Ketoreductase adrE.